Reading from the N-terminus, the 253-residue chain is Triosephosphate isomerase (253 aa).

8–10 contributes to the substrate binding site; that stretch reads NWK. The active-site Electrophile is the His93. The active-site Proton acceptor is Glu165. Residues Gly171, Ser210, and 231-232 each bind substrate; that span reads GG.

It belongs to the triosephosphate isomerase family. Homodimer.

It is found in the cytoplasm. The enzyme catalyses D-glyceraldehyde 3-phosphate = dihydroxyacetone phosphate. The protein operates within carbohydrate biosynthesis; gluconeogenesis. Its pathway is carbohydrate degradation; glycolysis; D-glyceraldehyde 3-phosphate from glycerone phosphate: step 1/1. Its function is as follows. Involved in the gluconeogenesis. Catalyzes stereospecifically the conversion of dihydroxyacetone phosphate (DHAP) to D-glyceraldehyde-3-phosphate (G3P). The polypeptide is Triosephosphate isomerase (Francisella tularensis subsp. mediasiatica (strain FSC147)).